The sequence spans 198 residues: Recombination protein RecR (198 aa).

A C4-type zinc finger spans residues C57–C72. The 96-residue stretch at T80–A175 folds into the Toprim domain.

The protein belongs to the RecR family.

Functionally, may play a role in DNA repair. It seems to be involved in an RecBC-independent recombinational process of DNA repair. It may act with RecF and RecO. The protein is Recombination protein RecR of Lactococcus lactis subsp. lactis (strain IL1403) (Streptococcus lactis).